The chain runs to 308 residues: Ribosomal RNA large subunit methyltransferase F (308 aa).

It belongs to the methyltransferase superfamily. METTL16/RlmF family.

The protein resides in the cytoplasm. It carries out the reaction adenosine(1618) in 23S rRNA + S-adenosyl-L-methionine = N(6)-methyladenosine(1618) in 23S rRNA + S-adenosyl-L-homocysteine + H(+). Its function is as follows. Specifically methylates the adenine in position 1618 of 23S rRNA. This Escherichia coli O6:H1 (strain CFT073 / ATCC 700928 / UPEC) protein is Ribosomal RNA large subunit methyltransferase F.